The sequence spans 207 residues: Large ribosomal subunit protein uL4 (207 aa).

The segment at 47–78 (GTHKVKNRSEVRGGGRKPWRQKGTGRARQGSI) is disordered. Positions 60–71 (GGRKPWRQKGTG) are enriched in basic residues.

This sequence belongs to the universal ribosomal protein uL4 family. Part of the 50S ribosomal subunit.

Its function is as follows. One of the primary rRNA binding proteins, this protein initially binds near the 5'-end of the 23S rRNA. It is important during the early stages of 50S assembly. It makes multiple contacts with different domains of the 23S rRNA in the assembled 50S subunit and ribosome. Functionally, forms part of the polypeptide exit tunnel. The polypeptide is Large ribosomal subunit protein uL4 (Listeria innocua serovar 6a (strain ATCC BAA-680 / CLIP 11262)).